The following is a 368-amino-acid chain: Core-capsid bridging protein (368 aa).

Disordered stretches follow at residues 17 to 49 (EIYG…DELD) and 307 to 340 (GYRG…QPVL). Over residues 22-31 (PKKEEQDYKP) the composition is skewed to basic and acidic residues. 2 stretches are compositionally biased toward basic residues: residues 32–41 (RKLKRVKKKK) and 314–337 (RPRR…RRRQ).

Belongs to the adenoviridae core-capsid bridging protein family. Monomer. Homodimer. Exists in equilibrium between monomers and dimers in solution. Interacts with the histone-like nucleoprotein; this interactions bridge the virus core to the capsid. Interacts with core protein X; this interactions bridge the virus core to the capsid. Interacts with the endosome lysis protein VI; this interactions bridge the virus core to the capsid. Interacts with the peripentonal hexons. Interacts with host NPM1; this interaction might play a role in virus assembly. In terms of processing, during virion entry, is ubiquitinated at the nuclear pore complex by host MIB1. This dissociates viral genomic DNA from capsid and allows genome delivery into nucleus for infection.

It is found in the virion. The protein resides in the host nucleus. It localises to the host nucleolus. Its function is as follows. Associates loosely with the viral DNA to form an outer shell around the nucleoprotein-DNA complex and links it with the capsid by binding the endosome lysis protein. During entry, secures the viral genome in the capsid until it reaches the nuclear pore complex, preventing innate immunity responses. Dissociates from the viral genome at nuclear pore. Might be involved in nuclear capsid assembly of the viral particles through its association with NPM1/nucleophosmin. This chain is Core-capsid bridging protein, found in Human adenovirus C serotype 5 (HAdV-5).